The primary structure comprises 285 residues: ATP synthase gamma chain (285 aa).

It belongs to the ATPase gamma chain family. F-type ATPases have 2 components, CF(1) - the catalytic core - and CF(0) - the membrane proton channel. CF(1) has five subunits: alpha(3), beta(3), gamma(1), delta(1), epsilon(1). CF(0) has three main subunits: a, b and c.

It localises to the cell membrane. Produces ATP from ADP in the presence of a proton gradient across the membrane. The gamma chain is believed to be important in regulating ATPase activity and the flow of protons through the CF(0) complex. This is ATP synthase gamma chain from Dehalococcoides mccartyi (strain ATCC BAA-2266 / KCTC 15142 / 195) (Dehalococcoides ethenogenes (strain 195)).